The following is a 337-amino-acid chain: B3 domain-containing protein REM16 (337 aa).

2 consecutive DNA-binding regions (TF-B3) follow at residues Thr22–Gln116 and Phe223–Glu321.

The protein localises to the nucleus. This Arabidopsis thaliana (Mouse-ear cress) protein is B3 domain-containing protein REM16 (REM16).